The chain runs to 225 residues: Cytidylate kinase (225 aa).

ATP is bound at residue 12-20; sequence GPSGAGKGT.

Belongs to the cytidylate kinase family. Type 1 subfamily.

Its subcellular location is the cytoplasm. It carries out the reaction CMP + ATP = CDP + ADP. The catalysed reaction is dCMP + ATP = dCDP + ADP. In Proteus mirabilis (strain HI4320), this protein is Cytidylate kinase.